A 493-amino-acid polypeptide reads, in one-letter code: Proline--tRNA ligase (493 aa).

It belongs to the class-II aminoacyl-tRNA synthetase family. ProS type 3 subfamily. In terms of assembly, homodimer.

The protein resides in the cytoplasm. The catalysed reaction is tRNA(Pro) + L-proline + ATP = L-prolyl-tRNA(Pro) + AMP + diphosphate. Its function is as follows. Catalyzes the attachment of proline to tRNA(Pro) in a two-step reaction: proline is first activated by ATP to form Pro-AMP and then transferred to the acceptor end of tRNA(Pro). The polypeptide is Proline--tRNA ligase (Porphyromonas gingivalis (strain ATCC 33277 / DSM 20709 / CIP 103683 / JCM 12257 / NCTC 11834 / 2561)).